The primary structure comprises 275 residues: Polyamine aminopropyltransferase (275 aa).

One can recognise a PABS domain in the interval 2 to 235 (HLWFTEKQND…AMWSFTIGSK (234 aa)). Gln31 contacts S-methyl-5'-thioadenosine. Positions 62 and 86 each coordinate spermidine. S-methyl-5'-thioadenosine contacts are provided by residues Glu106 and 137-138 (DG). Residue Asp155 is the Proton acceptor of the active site. 155–158 (DSTD) is a binding site for spermidine. Pro162 serves as a coordination point for S-methyl-5'-thioadenosine.

It belongs to the spermidine/spermine synthase family. As to quaternary structure, homodimer or homotetramer.

The protein localises to the cytoplasm. It carries out the reaction S-adenosyl 3-(methylsulfanyl)propylamine + putrescine = S-methyl-5'-thioadenosine + spermidine + H(+). The protein operates within amine and polyamine biosynthesis; spermidine biosynthesis; spermidine from putrescine: step 1/1. Catalyzes the irreversible transfer of a propylamine group from the amino donor S-adenosylmethioninamine (decarboxy-AdoMet) to putrescine (1,4-diaminobutane) to yield spermidine. This chain is Polyamine aminopropyltransferase, found in Desulforudis audaxviator (strain MP104C).